Consider the following 271-residue polypeptide: Acyl-[acyl-carrier-protein]--UDP-N-acetylglucosamine O-acyltransferase (271 aa).

Belongs to the transferase hexapeptide repeat family. LpxA subfamily. Homotrimer.

It localises to the cytoplasm. It carries out the reaction a (3R)-hydroxyacyl-[ACP] + UDP-N-acetyl-alpha-D-glucosamine = a UDP-3-O-[(3R)-3-hydroxyacyl]-N-acetyl-alpha-D-glucosamine + holo-[ACP]. Its pathway is glycolipid biosynthesis; lipid IV(A) biosynthesis; lipid IV(A) from (3R)-3-hydroxytetradecanoyl-[acyl-carrier-protein] and UDP-N-acetyl-alpha-D-glucosamine: step 1/6. In terms of biological role, involved in the biosynthesis of lipid A, a phosphorylated glycolipid that anchors the lipopolysaccharide to the outer membrane of the cell. The sequence is that of Acyl-[acyl-carrier-protein]--UDP-N-acetylglucosamine O-acyltransferase from Agrobacterium fabrum (strain C58 / ATCC 33970) (Agrobacterium tumefaciens (strain C58)).